A 207-amino-acid polypeptide reads, in one-letter code: Small ribosomal subunit protein eS1 (207 aa).

Belongs to the eukaryotic ribosomal protein eS1 family.

This is Small ribosomal subunit protein eS1 from Methanosarcina barkeri (strain Fusaro / DSM 804).